The primary structure comprises 107 residues: Integration host factor subunit alpha (107 aa).

The protein belongs to the bacterial histone-like protein family. Heterodimer of an alpha and a beta chain.

Its function is as follows. This protein is one of the two subunits of integration host factor, a specific DNA-binding protein that functions in genetic recombination as well as in transcriptional and translational control. The chain is Integration host factor subunit alpha from Brucella suis (strain ATCC 23445 / NCTC 10510).